The following is a 296-amino-acid chain: Glycine--tRNA ligase alpha subunit (296 aa).

It belongs to the class-II aminoacyl-tRNA synthetase family. In terms of assembly, tetramer of two alpha and two beta subunits.

Its subcellular location is the cytoplasm. It carries out the reaction tRNA(Gly) + glycine + ATP = glycyl-tRNA(Gly) + AMP + diphosphate. In Francisella tularensis subsp. novicida (strain U112), this protein is Glycine--tRNA ligase alpha subunit.